We begin with the raw amino-acid sequence, 321 residues long: 4-hydroxy-2-oxoglutarate aldolase, mitochondrial (321 aa).

Residues 1–23 (MLGPQIWASMRQGLSRGLSRNVK) constitute a mitochondrion transit peptide. 71–72 (ST) is a substrate binding site. K190 acts as the Schiff-base intermediate with substrate in catalysis. Substrate is bound by residues S192 and G216.

The protein belongs to the DapA family. As to quaternary structure, homotetramer.

The protein localises to the mitochondrion. The catalysed reaction is (4S)-4-hydroxy-2-oxoglutarate = glyoxylate + pyruvate. It carries out the reaction (4R)-4-hydroxy-2-oxoglutarate = glyoxylate + pyruvate. Its activity is regulated as follows. Inhibited by divalent cations. Catalyzes the final step in the metabolic pathway of hydroxyproline. The protein is 4-hydroxy-2-oxoglutarate aldolase, mitochondrial (Hoga1) of Mus musculus (Mouse).